The primary structure comprises 402 residues: E3 ubiquitin-protein ligase makorin-2 (402 aa).

C3H1-type zinc fingers lie at residues 2–29 (TTKQVTCRYFLHGVCREGNHCQFSHDPS), 31–58 (SKPSTICKFYQRGTCAYGERCRYDHVKL), and 141–168 (QDLPRLCPYAAVGHCYYEENCIYLHGDK). A makorin-type Cys-His region spans residues 169-198 (CEVCGLQVLDPHNPEQRSMHEKMCLLAFEA). Residues 214–268 (CSICMEVVVQKMNPSDRRFGILSSCCHVFCLACIRKWRCTRNFSNKIIKSCPECR) form an RING-type zinc finger. A C3H1-type 4 zinc finger spans residues 297 to 326 (GVGKKPCKYFDQGRGSCPFGGKCLYLHALP).

It is found in the cytoplasm. Its subcellular location is the nucleus. The enzyme catalyses S-ubiquitinyl-[E2 ubiquitin-conjugating enzyme]-L-cysteine + [acceptor protein]-L-lysine = [E2 ubiquitin-conjugating enzyme]-L-cysteine + N(6)-ubiquitinyl-[acceptor protein]-L-lysine.. It functions in the pathway protein modification; protein ubiquitination. In terms of biological role, E3 ubiquitin ligase catalyzing the covalent attachment of ubiquitin moieties onto substrate proteins. Inhibits neurogenesis and axis formation during embryonic development by modulating the phosphatidylinositol 3-kinase (PI3K) pathway. Acts downstream of PI3K and akt1 to up-regulate gsk3b mRNA expression. The polypeptide is E3 ubiquitin-protein ligase makorin-2 (Takifugu rubripes (Japanese pufferfish)).